The primary structure comprises 295 residues: 33 kDa chaperonin (295 aa).

Cystine bridges form between cysteine 233–cysteine 235 and cysteine 267–cysteine 270.

Belongs to the HSP33 family. Under oxidizing conditions two disulfide bonds are formed involving the reactive cysteines. Under reducing conditions zinc is bound to the reactive cysteines and the protein is inactive.

It localises to the cytoplasm. Redox regulated molecular chaperone. Protects both thermally unfolding and oxidatively damaged proteins from irreversible aggregation. Plays an important role in the bacterial defense system toward oxidative stress. The chain is 33 kDa chaperonin from Mannheimia succiniciproducens (strain KCTC 0769BP / MBEL55E).